A 319-amino-acid chain; its full sequence is 1-aminocyclopropane-1-carboxylate oxidase 1 (319 aa).

The region spanning 153–253 (PNFGTKVSNY…RMSLASFYNP (101 aa)) is the Fe2OG dioxygenase domain. His177, Asp179, and His234 together coordinate Fe cation.

It belongs to the iron/ascorbate-dependent oxidoreductase family. It depends on Fe cation as a cofactor.

It catalyses the reaction 1-aminocyclopropane-1-carboxylate + L-ascorbate + O2 = ethene + L-dehydroascorbate + hydrogen cyanide + CO2 + 2 H2O. The protein operates within alkene biosynthesis; ethylene biosynthesis via S-adenosyl-L-methionine; ethylene from S-adenosyl-L-methionine: step 2/2. The chain is 1-aminocyclopropane-1-carboxylate oxidase 1 (ACO1) from Petunia hybrida (Petunia).